Consider the following 362-residue polypeptide: S-adenosylmethionine decarboxylase proenzyme 2 (362 aa).

Residues E9 and E12 contribute to the active site. E68 serves as a coordination point for substrate. S69 functions as the Schiff-base intermediate with substrate; via pyruvic acid in the catalytic mechanism. S69 carries the pyruvic acid (Ser); by autocatalysis modification. The active-site Proton donor; for catalytic activity is C83. Active-site proton acceptor; for processing activity residues include S232 and H245. E249 serves as a coordination point for substrate.

This sequence belongs to the eukaryotic AdoMetDC family. The cofactor is pyruvate. In terms of processing, is synthesized initially as an inactive proenzyme. Formation of the active enzyme involves a self-maturation process in which the active site pyruvoyl group is generated from an internal serine residue via an autocatalytic post-translational modification. Two non-identical subunits are generated from the proenzyme in this reaction, and the pyruvate is formed at the N-terminus of the alpha chain, which is derived from the carboxyl end of the proenzyme. The post-translation cleavage follows an unusual pathway, termed non-hydrolytic serinolysis, in which the side chain hydroxyl group of the serine supplies its oxygen atom to form the C-terminus of the beta chain, while the remainder of the serine residue undergoes an oxidative deamination to produce ammonia and the pyruvoyl group blocking the N-terminus of the alpha chain.

It carries out the reaction S-adenosyl-L-methionine + H(+) = S-adenosyl 3-(methylsulfanyl)propylamine + CO2. Its pathway is amine and polyamine biosynthesis; S-adenosylmethioninamine biosynthesis; S-adenosylmethioninamine from S-adenosyl-L-methionine: step 1/1. Its function is as follows. Essential for biosynthesis of the polyamines spermidine and spermine. Essential for polyamine homeostasis, and normal plant embryogenesis, growth and development. This is S-adenosylmethionine decarboxylase proenzyme 2 from Arabidopsis thaliana (Mouse-ear cress).